The primary structure comprises 286 residues: General stress protein 39 (286 aa).

A disordered region spans residues M1–S26. Residue L46–A70 participates in NAD(+) binding. S178 contributes to the substrate binding site. The active-site Proton acceptor is the Y191.

It belongs to the short-chain dehydrogenases/reductases (SDR) family.

The chain is General stress protein 39 (ydaD) from Bacillus subtilis (strain 168).